A 132-amino-acid chain; its full sequence is Translation initiation factor 5A (132 aa).

Residue K36 is modified to Hypusine.

Belongs to the eIF-5A family.

It localises to the cytoplasm. Functions by promoting the formation of the first peptide bond. This chain is Translation initiation factor 5A (eIF5A), found in Desulfurococcus amylolyticus (strain DSM 18924 / JCM 16383 / VKM B-2413 / 1221n) (Desulfurococcus kamchatkensis).